Consider the following 130-residue polypeptide: Small ribosomal subunit protein uS11 (130 aa).

It belongs to the universal ribosomal protein uS11 family. As to quaternary structure, part of the 30S ribosomal subunit. Interacts with proteins S7 and S18. Binds to IF-3.

Located on the platform of the 30S subunit, it bridges several disparate RNA helices of the 16S rRNA. Forms part of the Shine-Dalgarno cleft in the 70S ribosome. This Xylella fastidiosa (strain 9a5c) protein is Small ribosomal subunit protein uS11.